We begin with the raw amino-acid sequence, 890 residues long: Putative RNA-binding protein 15B (890 aa).

A disordered region spans residues 1–133; sequence MKRQSERDSS…AEPACPGSSA (133 aa). A compositionally biased stretch (low complexity) spans 10 to 20; the sequence is SPSGRGSSSSA. Basic and acidic residues-rich tracts occupy residues 22–34 and 66–78; these read RPRE…EAGG and GHRD…DANH. A compositionally biased stretch (gly residues) spans 86-99; it reads SGSGAGGGGRGGKA. Phosphoserine occurs at positions 109 and 113. A compositionally biased stretch (pro residues) spans 113–124; the sequence is SPLPPPPPPPGA. The 81-residue stretch at 139 to 219 folds into the RRM 1 domain; it reads KTLLISSLSP…RPLKVEPVYL (81 aa). Residue K213 forms a Glycyl lysine isopeptide (Lys-Gly) (interchain with G-Cter in SUMO2) linkage. Residues 219 to 253 are disordered; the sequence is LRGGGGSSRRSSSSSAAASTPPPGPPAPADPLGYL. A compositionally biased stretch (low complexity) spans 226–237; that stretch reads SRRSSSSSAAAS. Residues 238 to 247 show a composition bias toward pro residues; sequence TPPPGPPAPA. Phosphoserine occurs at positions 265 and 267. RRM domains follow at residues 337 to 414 and 418 to 492; these read RNLF…YGKA and TRLW…FAKA. Phosphothreonine is present on T532. The tract at residues 547–705 is disordered; it reads EGDWTSPSKS…KPLEEPKHET (159 aa). 3 positions are modified to phosphoserine: S552, S556, and S562. Composition is skewed to basic and acidic residues over residues 573-616 and 626-646; these read RSGE…ERSR and RGSD…EGTK. The Nuclear localization signal motif lies at 593–597; it reads RRKRR. Residues 647–657 are compositionally biased toward low complexity; that stretch reads ESSSNSLSNSR. Positions 671–703 are enriched in basic and acidic residues; that stretch reads EAADSSHGKKARDSERNHRTTEAEPKPLEEPKH. A Glycyl lysine isopeptide (Lys-Gly) (interchain with G-Cter in SUMO2) cross-link involves residue K702. An SPOC domain is found at 711 to 889; it reads LSEYAQTLQL…HMVIVIVRDT (179 aa). The tract at residues 722–890 is interaction with Epstein-Barr virus BMLF1; that stretch reads WNGLLVLKNS…MVIVIVRDTA (169 aa).

Belongs to the RRM Spen family. Component of the WMM complex, a N6-methyltransferase complex composed of a catalytic subcomplex, named MAC, and of an associated subcomplex, named MACOM. The MAC subcomplex is composed of METTL3 and METTL14. The MACOM subcomplex is composed of WTAP, ZC3H13, CBLL1/HAKAI, VIRMA, and, in some cases of RBM15 (RBM15 or RBM15B). May interact with NCOR2. Interacts with NXF1, the interaction is required to promote mRNA export. As to quaternary structure, (Microbial infection) Interacts (via the SPOC domain) with Epstein-Barr virus BMLF1 (via the N-terminus); the interaction is direct. As to expression, ubiquitously expressed.

Its subcellular location is the nucleus. It localises to the nucleoplasm. The protein localises to the nucleus speckle. It is found in the nucleus envelope. In terms of biological role, RNA-binding protein that acts as a key regulator of N6-methyladenosine (m6A) methylation of RNAs, thereby regulating different processes, such as alternative splicing of mRNAs and X chromosome inactivation mediated by Xist RNA. Associated component of the WMM complex, a complex that mediates N6-methyladenosine (m6A) methylation of RNAs, a modification that plays a role in the efficiency of mRNA splicing and RNA processing. Plays a key role in m6A methylation, possibly by binding target RNAs and recruiting the WMM complex. Involved in random X inactivation mediated by Xist RNA: acts by binding Xist RNA and recruiting the WMM complex, which mediates m6A methylation, leading to target YTHDC1 reader on Xist RNA and promoting transcription repression activity of Xist. Functions in the regulation of alternative or illicit splicing, possibly by regulating m6A methylation. Inhibits pre-mRNA splicing. Also functions as a mRNA export factor by acting as a cofactor for the nuclear export receptor NXF1. The chain is Putative RNA-binding protein 15B from Homo sapiens (Human).